A 392-amino-acid polypeptide reads, in one-letter code: Formate-dependent phosphoribosylglycinamide formyltransferase (392 aa).

N(1)-(5-phospho-beta-D-ribosyl)glycinamide contacts are provided by residues 22-23 (EL) and E82. ATP-binding positions include R114, K155, 160–165 (SSGKGQ), 195–198 (EGVV), and E203. The ATP-grasp domain maps to 119 to 308 (RLAAEELGLP…EFALHVRAFL (190 aa)). Mg(2+)-binding residues include E267 and E279. N(1)-(5-phospho-beta-D-ribosyl)glycinamide-binding positions include D286, K355, and 362–363 (RR).

It belongs to the PurK/PurT family. As to quaternary structure, homodimer.

The enzyme catalyses N(1)-(5-phospho-beta-D-ribosyl)glycinamide + formate + ATP = N(2)-formyl-N(1)-(5-phospho-beta-D-ribosyl)glycinamide + ADP + phosphate + H(+). Its pathway is purine metabolism; IMP biosynthesis via de novo pathway; N(2)-formyl-N(1)-(5-phospho-D-ribosyl)glycinamide from N(1)-(5-phospho-D-ribosyl)glycinamide (formate route): step 1/1. Involved in the de novo purine biosynthesis. Catalyzes the transfer of formate to 5-phospho-ribosyl-glycinamide (GAR), producing 5-phospho-ribosyl-N-formylglycinamide (FGAR). Formate is provided by PurU via hydrolysis of 10-formyl-tetrahydrofolate. This chain is Formate-dependent phosphoribosylglycinamide formyltransferase, found in Cronobacter sakazakii (strain ATCC BAA-894) (Enterobacter sakazakii).